The primary structure comprises 240 residues: Sec-independent protein translocase protein TatC (240 aa).

6 helical membrane-spanning segments follow: residues isoleucine 15–valine 35, leucine 61–leucine 81, leucine 103–leucine 123, phenylalanine 152–valine 172, phenylalanine 191–leucine 211, and methionine 212–arginine 232.

The protein belongs to the TatC family. Forms a complex with TatA.

The protein localises to the cell inner membrane. In terms of biological role, part of the twin-arginine translocation (Tat) system that transports large folded proteins containing a characteristic twin-arginine motif in their signal peptide across membranes. The sequence is that of Sec-independent protein translocase protein TatC from Aquifex aeolicus (strain VF5).